A 266-amino-acid chain; its full sequence is Apolipoprotein A-I (266 aa).

Positions 1 to 18 (MKAVVLTLAVLFLTGSQA) are cleaved as a signal peptide. Tandem repeats lie at residues 67–88 (LKLL…EQIG) and 89–110 (PVTQ…QEMN). The 10 X approximate tandem repeats stretch occupies residues 67-266 (LKLLDNWDSL…DEATKKLNSQ (200 aa)). At M109 the chain carries Methionine sulfoxide. Residues 111-121 (KDLEEVKKKVQ) form a 3; half-length repeat. A run of 5 repeats spans residues 122–143 (PYLD…QKVA), 144–165 (PLGA…EKLS), 166–187 (PLGE…AQLA), 188–209 (PYSE…EGGG), and 210–231 (AALT…EKAK). A 9; half-length repeat occupies 232 to 242 (PALEDLRQGLL). Repeat unit 10 spans residues 243–266 (PVLENFRDSLLAAVDEATKKLNSQ).

Belongs to the apolipoprotein A1/A4/E family. Homodimer. Interacts with APOA1BP and CLU. Component of a sperm activating protein complex (SPAP), consisting of APOA1, an immunoglobulin heavy chain, an immunoglobulin light chain and albumin. Interacts with NDRG1. Interacts with SCGB3A2. Interacts with NAXE and YJEFN3. Glycosylated. In terms of processing, palmitoylated. Post-translationally, phosphorylation sites are present in the extracellular medium.

It localises to the secreted. In terms of biological role, participates in the reverse transport of cholesterol from tissues to the liver for excretion by promoting cholesterol efflux from tissues and by acting as a cofactor for the lecithin cholesterol acyltransferase (LCAT). As part of the SPAP complex, activates spermatozoa motility. The sequence is that of Apolipoprotein A-I (APOA1) from Neomonachus schauinslandi (Hawaiian monk seal).